A 217-amino-acid chain; its full sequence is Fucoxanthin-chlorophyll a-c binding protein A, chloroplastic (217 aa).

The transit peptide at 1–39 (MKSAVMAVACAAAPGLRRPSAFNGAALTTSAKSSSAMKM) directs the protein to the chloroplast. A run of 3 helical transmembrane segments spans residues 81-101 (IAML…PGML), 122-142 (IPPA…LAVM), and 183-203 (GRAA…NNKP).

Belongs to the fucoxanthin chlorophyll protein family. As to quaternary structure, the LHC complex of chromophytic algae is composed of fucoxanthin, chlorophyll A and C bound non-covalently by fucoxanthin chlorophyll proteins (FCPs). The ratio of pigments in this LHC is; fucoxanthin: chlorophyll C: chlorophyll A; (0.6-1): (0.1-0.3): (1).

It localises to the plastid. The protein localises to the chloroplast thylakoid membrane. Functionally, the light-harvesting complex (LHC) functions as a light receptor, it captures and delivers excitation energy to photosystems with which it is closely associated. Energy is transferred from the carotenoid and chlorophyll C (or B) to chlorophyll A and the photosynthetic reaction centers where it is used to synthesize ATP and reducing power. The protein is Fucoxanthin-chlorophyll a-c binding protein A, chloroplastic (FCPA) of Macrocystis pyrifera (Giant kelp).